A 388-amino-acid polypeptide reads, in one-letter code: 4-hydroxy-tetrahydrodipicolinate synthase 1, chloroplastic (388 aa).

The tract at residues 1–51 (MPYLQPPRPHPHPHPTSRLSRASPPSPFPFFPAGTSRSGRLQPVPVSGHSA) is disordered. A chloroplast-targeting transit peptide spans 1–62 (MPYLQPPRPH…RVSKGKFAVA (62 aa)). Thr131 contacts pyruvate. The Proton donor/acceptor role is filled by Tyr217. The active-site Schiff-base intermediate with substrate is the Lys245. Ile284 provides a ligand contact to pyruvate.

It belongs to the DapA family. In terms of assembly, tetramer of modified subunits derived from two genes in different combinations.

Its subcellular location is the plastid. The protein resides in the chloroplast. It catalyses the reaction L-aspartate 4-semialdehyde + pyruvate = (2S,4S)-4-hydroxy-2,3,4,5-tetrahydrodipicolinate + H2O + H(+). The protein operates within amino-acid biosynthesis; L-lysine biosynthesis via DAP pathway; (S)-tetrahydrodipicolinate from L-aspartate: step 3/4. With respect to regulation, sensitive to lysine inhibition. This inhibition increase in an allosteric manner with increasing concentration of the inhibitor. Catalyzes the condensation of (S)-aspartate-beta-semialdehyde [(S)-ASA] and pyruvate to 4-hydroxy-tetrahydrodipicolinate (HTPA). This is 4-hydroxy-tetrahydrodipicolinate synthase 1, chloroplastic from Triticum aestivum (Wheat).